A 269-amino-acid polypeptide reads, in one-letter code: Intercellular adhesion molecule 4 (269 aa).

The first 20 residues, 1–20 (SLFPLSLLFFLAAAYPGVGS), serve as a signal peptide directing secretion. Topologically, residues 21–238 (ALGRRTKRAQ…MLAWSSAPTA (218 aa)) are extracellular. 2 Ig-like C2-type domains span residues 60–122 (GKSV…TRWA) and 144–215 (GRKY…LNLD). 4 N-linked (GlcNAc...) asparagine glycosylation sites follow: Asn66, Asn76, Asn188, and Asn221. 4 disulfide bridges follow: Cys67–Cys111, Cys67–Cys115, Cys71–Cys115, and Cys151–Cys208. A helical transmembrane segment spans residues 239–259 (LASVSIAALVGILLTVGAAYL). At 260 to 269 (CKCLAMKSQA) the chain is on the cytoplasmic side.

The protein belongs to the immunoglobulin superfamily. ICAM family. Post-translationally, N- and O-glycosylated.

Its subcellular location is the cell membrane. ICAM proteins are ligands for the leukocyte adhesion protein LFA-1 (integrin alpha-L/beta-2). ICAM4 is also a ligand for alpha-4/beta-1 and alpha-V integrins. This is Intercellular adhesion molecule 4 (ICAM4) from Pan troglodytes (Chimpanzee).